The chain runs to 455 residues: Putative PTS system EIIBC component YbbF (455 aa).

One can recognise a PTS EIIB type-1 domain in the interval 8 to 90 (HHLAQKILEL…SKLVSAEEGA (83 aa)). Cysteine 30 (phosphocysteine intermediate; for EIIB activity) is an active-site residue. In terms of domain architecture, PTS EIIC type-1 spans 116-455 (RKIASIFIPL…YKDEMASQFD (340 aa)). 10 helical membrane-spanning segments follow: residues 118 to 138 (IASI…ITGI), 154 to 174 (IAII…ILVG), 181 to 201 (FGGT…PEIA), 210 to 230 (LLPG…IAYT), 250 to 270 (VSLL…GGFI), 281 to 301 (ILDI…LPLV), 325 to 345 (LLPI…AVFV), 355 to 375 (AIAG…IFGV), 399 to 419 (YFQV…FLVL), and 423 to 443 (IILY…LTYA).

The protein resides in the cell membrane. Functionally, the phosphoenolpyruvate-dependent sugar phosphotransferase system (sugar PTS), a major carbohydrate active -transport system, catalyzes the phosphorylation of incoming sugar substrates concomitantly with their translocation across the cell membrane. This Bacillus subtilis (strain 168) protein is Putative PTS system EIIBC component YbbF (ybbF).